Here is a 462-residue protein sequence, read N- to C-terminus: Retinoic acid receptor alpha (462 aa).

Residues 1–87 are modulating; it reads MASNSSSCPT…PPPLPRIYKP (87 aa). The segment covering 52–64 has biased composition (polar residues); that stretch reads GYSTPSPATIETQ. The tract at residues 52–77 is disordered; it reads GYSTPSPATIETQSSSSEEIVPSPPS. S77 carries the post-translational modification Phosphoserine; by CDK7. 2 consecutive NR C4-type zinc fingers follow at residues 88-108 and 124-148; these read CFVC…CEGC and CHRD…LQKC. Positions 88–153 form a DNA-binding region, nuclear receptor; it reads CFVCQDKSSG…RLQKCFDVGM (66 aa). Position 96 is a phosphoserine; by PKB/AKT1 (S96). A hinge region spans residues 154-182; it reads SKESVRNDRNKKKKEAPKPECSESYTLTP. Residues K166 and K171 each participate in a glycyl lysine isopeptide (Lys-Gly) (interchain with G-Cter in SUMO) cross-link. Positions 183-417 constitute an NR LBD domain; that stretch reads EVGELIEKVR…PLIQEMLENS (235 aa). The residue at position 219 (S219) is a Phosphoserine; by PKA. C235 serves as a coordination point for all-trans-retinoate. A UBR5-degron motif is present at residues 254–258; it reads IADQI. An all-trans-retinoate-binding site is contributed by S287. At K347 the chain carries N6,N6,N6-trimethyllysine. At S369 the chain carries Phosphoserine; by PKA and RPS6KA5. Residue K399 forms a Glycyl lysine isopeptide (Lys-Gly) (interchain with G-Cter in SUMO) linkage. A required for binding corepressor NCOR1 region spans residues 404 to 419; it reads GSMPPLIQEMLENSEG. Positions 408-416 match the 9aaTAD motif; the sequence is PLIQEMLEN. A disordered region spans residues 420–462; sequence LDTLSGQSGGGTRDGGGLAPPPGSCSPSLSPSSHRSSPATQSP. Residues 426 to 437 are compositionally biased toward gly residues; that stretch reads QSGGGTRDGGGL. Positions 444–462 are enriched in low complexity; that stretch reads CSPSLSPSSHRSSPATQSP.

The protein belongs to the nuclear hormone receptor family. NR1 subfamily. As to quaternary structure, heterodimer; with RXRA. Binds DNA preferentially as a heterodimer. RXRA serves as enhancer to induce RARA binding to RARE. Interacts with RXRG. Interacts with NCOA3 and NCOA6 coactivators, leading to a strong increase of transcription of target genes. Interacts with NCOA7; the interaction requires ligand-binding. Interacts (via the ligand-binding domain) with PRAME; interaction is direct and ligand (retinoic acid)-dependent. Interacts with PRKAR1A; the interaction negatively regulates RARA transcriptional activity. Interacts with NCOR1; the interaction occurs in the absence of ligand and represses transcriptional activity. Interacts with NCOR2. Interacts with PRMT2. Interacts with LRIF1. Interacts with ASXL1 and NCOA1. Interacts with ACTN4. Interacts with CDK7; the interaction is enhanced by interaction with GTF2H3. Interacts with GTF2H3; the interaction requires prior phosphorylation on Ser-369 which then enhances interaction with CDK7. In a complex with HDAC3, HDAC5 and HDAC7; the HDACs serve as corepressors of RARA, causing its deacetylation and inhibition of RARE DNA element binding; association with HDAC3, HDAC5 and HDAC7 is increased upon oscillatory shear stress. In the absence of hormonal ligand, interacts with TACC1. Post-translationally, phosphorylated on serine and threonine residues. Phosphorylation does not change during cell cycle. Phosphorylation on Ser-77 is crucial for the N-terminal AF1 transcriptional activity. Under stress conditions, MAPK8 enhances phosphorylation on Thr-181, Ser-445 and Ser-461 leading to RARA ubiquitination and degradation. Phosphorylation by AKT1 inhibits the transactivation activity. On retinoic acid stimulation, phosphorylation on Ser-369 by RPS6KA5 promotes interaction with GTF2H3 and the CDK7-mediated phosphorylation of Ser-77. In terms of processing, ubiquitinated by UBR5, leading to its degradation: UBR5 specifically recognizes and binds ligand-bound RARA when it is not associated with coactivators (NCOAs). In presence of NCOAs, the UBR5-degron is not accessible, preventing its ubiquitination and degradation. Sumoylated with SUMO2, mainly on Lys-399 which is also required for SENP6 binding. On all-trans retinoic acid (ATRA) binding, a conformational change may occur that allows sumoylation on two additional site, Lys-166 and Lys-171. Probably desumoylated by SENP6. Sumoylation levels determine nuclear localization and regulate ATRA-mediated transcriptional activity. Post-translationally, acetylated; acetylation is increased upon pulsatile shear stress and decreased upon oscillatory shear stress. In terms of tissue distribution, expressed in Sertoli cells and germ cells.

The protein resides in the nucleus. It localises to the cytoplasm. Receptor for retinoic acid. Retinoic acid receptors bind as heterodimers to their target response elements in response to their ligands, all-trans or 9-cis retinoic acid, and regulate gene expression in various biological processes. The RXR/RAR heterodimers bind to the retinoic acid response elements (RARE) composed of tandem 5'-AGGTCA-3' sites known as DR1-DR5. In the absence of ligand, the RXR-RAR heterodimers associate with a multiprotein complex containing transcription corepressors that induce histone deacetylation, chromatin condensation and transcriptional suppression. On ligand binding, the corepressors dissociate from the receptors and associate with the coactivators leading to transcriptional activation. Formation of heterocomplex with histone deacetylases might lead to inhibition of RARE DNA element binding and to transcriptional repression. Transcriptional activation and RARE DNA element binding might be supported by the transcription factor KLF2. RARA plays an essential role in the regulation of retinoic acid-induced germ cell development during spermatogenesis. Has a role in the survival of early spermatocytes at the beginning prophase of meiosis. In Sertoli cells, may promote the survival and development of early meiotic prophase spermatocytes. In concert with RARG, required for skeletal growth, matrix homeostasis and growth plate function. Together with RXRA, positively regulates microRNA-10a expression, thereby inhibiting the GATA6/VCAM1 signaling response to pulsatile shear stress in vascular endothelial cells. In association with HDAC3, HDAC5 and HDAC7 corepressors, plays a role in the repression of microRNA-10a and thereby promotes the inflammatory response. In Mus musculus (Mouse), this protein is Retinoic acid receptor alpha (Rara).